A 293-amino-acid polypeptide reads, in one-letter code: Glycine--tRNA ligase alpha subunit (293 aa).

The protein belongs to the class-II aminoacyl-tRNA synthetase family. As to quaternary structure, tetramer of two alpha and two beta subunits.

It localises to the cytoplasm. It carries out the reaction tRNA(Gly) + glycine + ATP = glycyl-tRNA(Gly) + AMP + diphosphate. The chain is Glycine--tRNA ligase alpha subunit from Aliarcobacter butzleri (strain RM4018) (Arcobacter butzleri).